A 70-amino-acid chain; its full sequence is U2-agatoxin-Ao1n (70 aa).

A signal peptide spans M1–A20. A propeptide spanning residues V21–R34 is cleaved from the precursor. 3 disulfides stabilise this stretch: C37–C53, C44–C58, and C52–C68. Position 69 is a leucine amide (L69).

This sequence belongs to the neurotoxin 01 (U2-agtx) family. As to expression, expressed by the venom gland.

The protein localises to the secreted. In terms of biological role, insect active toxin causing rapid but reversible paralysis in crickets. No activity shown in mammals. Does not show effect on mammalian voltage-gated calcium channels. The polypeptide is U2-agatoxin-Ao1n (Agelena orientalis (Funnel-web spider)).